The chain runs to 377 residues: Glutamate 5-kinase (377 aa).

Lys22 lines the ATP pocket. Substrate-binding residues include Ser62, Asp149, and Asn161. Residues 181-182 (TD) and 223-229 (TGGMVTK) each bind ATP. Positions 285-363 (RGTIVVDAGA…AQLKRFLGPQ (79 aa)) constitute a PUA domain.

Belongs to the glutamate 5-kinase family.

It is found in the cytoplasm. It carries out the reaction L-glutamate + ATP = L-glutamyl 5-phosphate + ADP. Its pathway is amino-acid biosynthesis; L-proline biosynthesis; L-glutamate 5-semialdehyde from L-glutamate: step 1/2. Its function is as follows. Catalyzes the transfer of a phosphate group to glutamate to form L-glutamate 5-phosphate. This is Glutamate 5-kinase from Bifidobacterium longum (strain DJO10A).